The chain runs to 698 residues: Polyphosphate kinase (698 aa).

Asn63 is a binding site for ATP. 2 residues coordinate Mg(2+): Arg390 and Arg420. The Phosphohistidine intermediate role is filled by His450. Residues Tyr483, Arg579, and His607 each contribute to the ATP site.

It belongs to the polyphosphate kinase 1 (PPK1) family. Requires Mg(2+) as cofactor. In terms of processing, an intermediate of this reaction is the autophosphorylated ppk in which a phosphate is covalently linked to a histidine residue through a N-P bond.

The catalysed reaction is [phosphate](n) + ATP = [phosphate](n+1) + ADP. In terms of biological role, catalyzes the reversible transfer of the terminal phosphate of ATP to form a long-chain polyphosphate (polyP). This is Polyphosphate kinase from Xylella fastidiosa (strain Temecula1 / ATCC 700964).